The primary structure comprises 131 residues: Translation initiation factor 5A (131 aa).

At Lys37 the chain carries Hypusine.

It belongs to the eIF-5A family.

It is found in the cytoplasm. Its function is as follows. Functions by promoting the formation of the first peptide bond. This chain is Translation initiation factor 5A (eIF5A), found in Methanococcus aeolicus (strain ATCC BAA-1280 / DSM 17508 / OCM 812 / Nankai-3).